A 254-amino-acid polypeptide reads, in one-letter code: uncharacterized protein (254 aa).

This is an uncharacterized protein from Haemophilus influenzae (strain ATCC 51907 / DSM 11121 / KW20 / Rd).